The chain runs to 642 residues: Threonine--tRNA ligase (642 aa).

Positions 1 to 61 constitute a TGS domain; that stretch reads MIKVTFPDGN…EHDGKLQLLT (61 aa). The catalytic stretch occupies residues 240 to 539; sequence DHRKIGKDLD…LIEEYKGSFP (300 aa). The Zn(2+) site is built by C334, H385, and H516.

Belongs to the class-II aminoacyl-tRNA synthetase family. As to quaternary structure, homodimer. Zn(2+) serves as cofactor.

Its subcellular location is the cytoplasm. The catalysed reaction is tRNA(Thr) + L-threonine + ATP = L-threonyl-tRNA(Thr) + AMP + diphosphate + H(+). Its function is as follows. Catalyzes the attachment of threonine to tRNA(Thr) in a two-step reaction: L-threonine is first activated by ATP to form Thr-AMP and then transferred to the acceptor end of tRNA(Thr). Also edits incorrectly charged L-seryl-tRNA(Thr). In Acholeplasma laidlawii (strain PG-8A), this protein is Threonine--tRNA ligase.